Reading from the N-terminus, the 131-residue chain is D-ribose pyranase (131 aa).

The active-site Proton donor is the histidine 20. Residues aspartate 28, histidine 98, and 120–122 (YAN) contribute to the substrate site.

It belongs to the RbsD / FucU family. RbsD subfamily. In terms of assembly, homodecamer.

The protein localises to the cytoplasm. It carries out the reaction beta-D-ribopyranose = beta-D-ribofuranose. Its pathway is carbohydrate metabolism; D-ribose degradation; D-ribose 5-phosphate from beta-D-ribopyranose: step 1/2. Catalyzes the interconversion of beta-pyran and beta-furan forms of D-ribose. The sequence is that of D-ribose pyranase from Bacillus cereus (strain 03BB102).